The following is a 155-amino-acid chain: 6,7-dimethyl-8-ribityllumazine synthase (155 aa).

Residues Phe-24, 58–60 (AFE), and 82–84 (AVI) contribute to the 5-amino-6-(D-ribitylamino)uracil site. 87–88 (ST) is a (2S)-2-hydroxy-3-oxobutyl phosphate binding site. Catalysis depends on His-90, which acts as the Proton donor. Phe-115 lines the 5-amino-6-(D-ribitylamino)uracil pocket. (2S)-2-hydroxy-3-oxobutyl phosphate is bound at residue Arg-129.

It belongs to the DMRL synthase family.

The catalysed reaction is (2S)-2-hydroxy-3-oxobutyl phosphate + 5-amino-6-(D-ribitylamino)uracil = 6,7-dimethyl-8-(1-D-ribityl)lumazine + phosphate + 2 H2O + H(+). The protein operates within cofactor biosynthesis; riboflavin biosynthesis; riboflavin from 2-hydroxy-3-oxobutyl phosphate and 5-amino-6-(D-ribitylamino)uracil: step 1/2. In terms of biological role, catalyzes the formation of 6,7-dimethyl-8-ribityllumazine by condensation of 5-amino-6-(D-ribitylamino)uracil with 3,4-dihydroxy-2-butanone 4-phosphate. This is the penultimate step in the biosynthesis of riboflavin. This Acetivibrio thermocellus (strain ATCC 27405 / DSM 1237 / JCM 9322 / NBRC 103400 / NCIMB 10682 / NRRL B-4536 / VPI 7372) (Clostridium thermocellum) protein is 6,7-dimethyl-8-ribityllumazine synthase.